Consider the following 476-residue polypeptide: Aspartyl/glutamyl-tRNA(Asn/Gln) amidotransferase subunit B (476 aa).

This sequence belongs to the GatB/GatE family. GatB subfamily. As to quaternary structure, heterotrimer of A, B and C subunits.

The catalysed reaction is L-glutamyl-tRNA(Gln) + L-glutamine + ATP + H2O = L-glutaminyl-tRNA(Gln) + L-glutamate + ADP + phosphate + H(+). It catalyses the reaction L-aspartyl-tRNA(Asn) + L-glutamine + ATP + H2O = L-asparaginyl-tRNA(Asn) + L-glutamate + ADP + phosphate + 2 H(+). Allows the formation of correctly charged Asn-tRNA(Asn) or Gln-tRNA(Gln) through the transamidation of misacylated Asp-tRNA(Asn) or Glu-tRNA(Gln) in organisms which lack either or both of asparaginyl-tRNA or glutaminyl-tRNA synthetases. The reaction takes place in the presence of glutamine and ATP through an activated phospho-Asp-tRNA(Asn) or phospho-Glu-tRNA(Gln). This chain is Aspartyl/glutamyl-tRNA(Asn/Gln) amidotransferase subunit B, found in Nitratidesulfovibrio vulgaris (strain ATCC 29579 / DSM 644 / CCUG 34227 / NCIMB 8303 / VKM B-1760 / Hildenborough) (Desulfovibrio vulgaris).